Reading from the N-terminus, the 269-residue chain is Tryptophan synthase alpha chain (269 aa).

Residues glutamate 49 and aspartate 60 each act as proton acceptor in the active site.

It belongs to the TrpA family. In terms of assembly, tetramer of two alpha and two beta chains.

It catalyses the reaction (1S,2R)-1-C-(indol-3-yl)glycerol 3-phosphate + L-serine = D-glyceraldehyde 3-phosphate + L-tryptophan + H2O. It functions in the pathway amino-acid biosynthesis; L-tryptophan biosynthesis; L-tryptophan from chorismate: step 5/5. In terms of biological role, the alpha subunit is responsible for the aldol cleavage of indoleglycerol phosphate to indole and glyceraldehyde 3-phosphate. The chain is Tryptophan synthase alpha chain from Pseudomonas putida (strain ATCC 700007 / DSM 6899 / JCM 31910 / BCRC 17059 / LMG 24140 / F1).